Consider the following 529-residue polypeptide: BTB/POZ domain-containing protein 6 (529 aa).

A BTB domain is found at 127–197 (ADVHFIVGPA…LYSDEIDLEA (71 aa)).

Homodimer and heterodimer. Interacts with cul3 via the BTB domain.

Its subcellular location is the cytoplasm. Adapter protein for the cul3 E3 ubiquitin-protein ligase complex. Involved in late neuronal development and muscle formation. The protein is BTB/POZ domain-containing protein 6 (btbd6) of Xenopus tropicalis (Western clawed frog).